The following is a 240-amino-acid chain: Putative tyrosine phosphatase 067L (240 aa).

The Tyrosine-protein phosphatase domain maps to 3-151 (QASFFVADKA…EREWPLNPTQ (149 aa)). The active-site Phosphocysteine intermediate is the Cys-96.

Belongs to the protein-tyrosine phosphatase family.

It carries out the reaction O-phospho-L-tyrosyl-[protein] + H2O = L-tyrosyl-[protein] + phosphate. The polypeptide is Putative tyrosine phosphatase 067L (Aedes vexans (Inland floodwater mosquito)).